We begin with the raw amino-acid sequence, 309 residues long: Low density lipoprotein receptor adapter protein 1-B (309 aa).

Residues 41–195 (LLEGMLFHLK…SDGEGASSSQ (155 aa)) form the PID domain. Residues 179-201 (DKREKSGSDGEGASSSQSDGSSS) form a disordered region. Positions 189–201 (EGASSSQSDGSSS) are enriched in low complexity. The short motif at 213 to 217 (LLDFE) is the Clathrin box element. Residues 250-277 (WELDDGLDEAFARLAESRTNPQVLDIGL) are AP-2 complex binding. Residues 258–267 (EAFARLAESR) carry the [DE]-X(1,2)-F-X-X-[FL]-X-X-X-R motif motif.

Interacts (via PID domain) with ldlr (via NPXY motif). Binds to soluble clathrin trimers and to the adapter protein complex 2 (AP-2, beta 2 subunit). Binds to phosphoinositides, which regulate clathrin bud assembly at the cell surface. Interacts with the VLDL receptor (vldlr). Interacts with the vitellogenin receptor. Expressed at high level during oogenesis and embryogenesis. Found at low level in the adult liver and spleen. Found at very low level in testis and heart. Not found in the oocyte vegetal cortex.

The protein resides in the cytoplasm. Adapter protein (clathrin-associated sorting protein (CLASP)) required for efficient endocytosis of the LDL receptor (LDLR). Also involved in the vitellogenin receptor mediated endocytosis of nutrients during oogenesis. The chain is Low density lipoprotein receptor adapter protein 1-B from Xenopus laevis (African clawed frog).